A 311-amino-acid polypeptide reads, in one-letter code: Glutaminase (311 aa).

Substrate is bound by residues Ser-66, Asn-116, Glu-162, Asn-169, Tyr-193, Tyr-245, and Val-263.

It belongs to the glutaminase family. As to quaternary structure, homotetramer.

It catalyses the reaction L-glutamine + H2O = L-glutamate + NH4(+). The sequence is that of Glutaminase from Rhodopseudomonas palustris (strain ATCC BAA-98 / CGA009).